The primary structure comprises 431 residues: Histidinol dehydrogenase (431 aa).

Residues Tyr-130, Gln-191, and Asn-214 each coordinate NAD(+). Residues Ser-237, Gln-259, and His-262 each contribute to the substrate site. Residues Gln-259 and His-262 each contribute to the Zn(2+) site. Catalysis depends on proton acceptor residues Glu-327 and His-328. 4 residues coordinate substrate: His-328, Asp-361, Glu-415, and His-420. Asp-361 is a Zn(2+) binding site. Position 420 (His-420) interacts with Zn(2+).

This sequence belongs to the histidinol dehydrogenase family. Zn(2+) is required as a cofactor.

It carries out the reaction L-histidinol + 2 NAD(+) + H2O = L-histidine + 2 NADH + 3 H(+). The protein operates within amino-acid biosynthesis; L-histidine biosynthesis; L-histidine from 5-phospho-alpha-D-ribose 1-diphosphate: step 9/9. In terms of biological role, catalyzes the sequential NAD-dependent oxidations of L-histidinol to L-histidinaldehyde and then to L-histidine. The protein is Histidinol dehydrogenase of Syntrophotalea carbinolica (strain DSM 2380 / NBRC 103641 / GraBd1) (Pelobacter carbinolicus).